The following is an 88-amino-acid chain: Small ribosomal subunit protein uS15c (88 aa).

Belongs to the universal ribosomal protein uS15 family. As to quaternary structure, part of the 30S ribosomal subunit.

The protein localises to the plastid. Its subcellular location is the chloroplast. This Calycanthus floridus var. glaucus (Eastern sweetshrub) protein is Small ribosomal subunit protein uS15c (rps15).